The primary structure comprises 299 residues: Tyrosine recombinase XerC (299 aa).

The 85-residue stretch at 1 to 85 (MKRQLEAYCA…AVRGLYRYLN (85 aa)) folds into the Core-binding (CB) domain. The 180-residue stretch at 106–285 (RLPKVLDTDR…DFQHLAAVYD (180 aa)) folds into the Tyr recombinase domain. Active-site residues include Arg-146, Lys-170, His-237, Arg-240, and His-263. Catalysis depends on Tyr-272, which acts as the O-(3'-phospho-DNA)-tyrosine intermediate.

It belongs to the 'phage' integrase family. XerC subfamily. In terms of assembly, forms a cyclic heterotetrameric complex composed of two molecules of XerC and two molecules of XerD.

The protein localises to the cytoplasm. Site-specific tyrosine recombinase, which acts by catalyzing the cutting and rejoining of the recombining DNA molecules. The XerC-XerD complex is essential to convert dimers of the bacterial chromosome into monomers to permit their segregation at cell division. It also contributes to the segregational stability of plasmids. This chain is Tyrosine recombinase XerC, found in Pseudomonas putida (strain ATCC 47054 / DSM 6125 / CFBP 8728 / NCIMB 11950 / KT2440).